Reading from the N-terminus, the 652-residue chain is Phosphoglucomutase 1, chloroplastic (652 aa).

The transit peptide at 1–84 directs the protein to the chloroplast; it reads MAFSAAASAS…LAARRTLRVR (84 aa). Residues Arg-118 and Ser-211 each contribute to the alpha-D-glucose 1,6-bisphosphate site. Catalysis depends on Ser-211, which acts as the Phosphoserine intermediate. The Mg(2+) site is built by Ser-211, Asp-376, Asp-378, and Asp-380. Ser-211 bears the Phosphoserine mark. Residues Asp-380, Arg-381, Thr-443, Glu-462, Ser-464, and Lys-475 each coordinate alpha-D-glucose 1,6-bisphosphate.

Belongs to the phosphohexose mutase family. Mg(2+) serves as cofactor.

The protein resides in the plastid. It localises to the chloroplast. The catalysed reaction is alpha-D-glucose 1-phosphate = alpha-D-glucose 6-phosphate. The enzyme catalyses O-phospho-L-seryl-[protein] + alpha-D-glucose 1-phosphate = alpha-D-glucose 1,6-bisphosphate + L-seryl-[protein]. It catalyses the reaction alpha-D-glucose 1,6-bisphosphate + L-seryl-[protein] = O-phospho-L-seryl-[protein] + alpha-D-glucose 6-phosphate. Its activity is regulated as follows. Inhibited by the Calvin cycle intermediates fructose-1,6-bisphosphate and ribulose-1,5-bisphosphate. In terms of biological role, catalyzes the reversible isomerization of alpha-D-glucose 1-phosphate to alpha-D-glucose 6-phosphate. The mechanism proceeds via the intermediate compound alpha-D-glucose 1,6-bisphosphate. This enzyme participates in both the breakdown and synthesis of glucose. Required for sucrose production and accumulation necessary during plant development. Promotes gravitropic responses, negative in shoots but positive in roots, by facilitating starch granules (statoliths) formation. The sequence is that of Phosphoglucomutase 1, chloroplastic from Marchantia polymorpha (Common liverwort).